Reading from the N-terminus, the 466-residue chain is NADH-quinone oxidoreductase subunit N (466 aa).

A run of 14 helical transmembrane segments spans residues 9 to 29 (LIPL…GAIV), 33 to 53 (CGTV…MLAP), 68 to 88 (PFTR…LLLA), 100 to 120 (EEYP…ASAA), 122 to 142 (FLTL…LVAY), 157 to 177 (LLMG…LYGA), 190 to 210 (SAAG…GLAF), 232 to 252 (VVAF…LLIL), 263 to 283 (APLW…ALLQ), 289 to 309 (MLAY…LSGG), 314 to 334 (AAAF…GALA), 359 to 379 (GVVL…VGFV), 394 to 416 (APLA…RVVV), and 438 to 458 (LSLG…GPLF).

Belongs to the complex I subunit 2 family. NDH-1 is composed of 14 different subunits. Subunits NuoA, H, J, K, L, M, N constitute the membrane sector of the complex.

It is found in the cell inner membrane. It carries out the reaction a quinone + NADH + 5 H(+)(in) = a quinol + NAD(+) + 4 H(+)(out). In terms of biological role, NDH-1 shuttles electrons from NADH, via FMN and iron-sulfur (Fe-S) centers, to quinones in the respiratory chain. The immediate electron acceptor for the enzyme in this species is believed to be ubiquinone. Couples the redox reaction to proton translocation (for every two electrons transferred, four hydrogen ions are translocated across the cytoplasmic membrane), and thus conserves the redox energy in a proton gradient. This is NADH-quinone oxidoreductase subunit N from Geobacter metallireducens (strain ATCC 53774 / DSM 7210 / GS-15).